Here is a 291-residue protein sequence, read N- to C-terminus: Protease HtpX (291 aa).

2 helical membrane-spanning segments follow: residues 4–24 and 36–56; these read IALFLATNLAVMIVFSIVLNI and LSGLLVMAVLFGFGGSLISLM. H143 serves as a coordination point for Zn(2+). The active site involves E144. A Zn(2+)-binding site is contributed by H147. The next 2 helical transmembrane spans lie at 151–171 and 199–219; these read GDMITMTLMQGVVNTFVIFLS and FIVSTVLELAFGFLASFLTMW. E225 is a Zn(2+) binding site.

The protein belongs to the peptidase M48B family. Requires Zn(2+) as cofactor.

It is found in the cell inner membrane. This Aliivibrio fischeri (strain ATCC 700601 / ES114) (Vibrio fischeri) protein is Protease HtpX.